The chain runs to 143 residues: Nucleoside diphosphate kinase (143 aa).

Residues Lys10, Phe58, Arg86, Thr92, Arg103, and Asn113 each coordinate ATP. His116 functions as the Pros-phosphohistidine intermediate in the catalytic mechanism.

This sequence belongs to the NDK family. As to quaternary structure, homotetramer. Mg(2+) serves as cofactor.

The protein localises to the cytoplasm. It catalyses the reaction a 2'-deoxyribonucleoside 5'-diphosphate + ATP = a 2'-deoxyribonucleoside 5'-triphosphate + ADP. The enzyme catalyses a ribonucleoside 5'-diphosphate + ATP = a ribonucleoside 5'-triphosphate + ADP. Major role in the synthesis of nucleoside triphosphates other than ATP. The ATP gamma phosphate is transferred to the NDP beta phosphate via a ping-pong mechanism, using a phosphorylated active-site intermediate. This Ehrlichia ruminantium (strain Welgevonden) protein is Nucleoside diphosphate kinase.